We begin with the raw amino-acid sequence, 140 residues long: UPF0306 protein YhbP (140 aa).

The protein belongs to the UPF0306 family.

In Escherichia coli O6:H1 (strain CFT073 / ATCC 700928 / UPEC), this protein is UPF0306 protein YhbP.